The sequence spans 545 residues: Mesoderm induction early response protein 2 (545 aa).

A Phosphoserine modification is found at Ser11. Positions 100 to 189 (DPISDRESEG…SSDTEEDSLP (90 aa)) are disordered. Over residues 140-153 (QSSADDLTPSVTSH) the composition is skewed to polar residues. The region spanning 195-292 (KEIMVGPQFQ…EALRRLRFNV (98 aa)) is the ELM2 domain. In terms of domain architecture, SANT spans 297–349 (DGLCAWSEEECRNFEHGFRVHGKNFHLIQANKVRTRSVGECVEYYYLWKKSER). The disordered stretch occupies residues 364-464 (YVPSGTTDAD…YQPAVTAPEP (101 aa)).

Part of a complex containing at least CDYL, MIER1, MIER2, HDAC1 and HDAC2.

The protein localises to the nucleus. Functionally, transcriptional repressor. This is Mesoderm induction early response protein 2 (MIER2) from Homo sapiens (Human).